We begin with the raw amino-acid sequence, 476 residues long: 3-isopropylmalate dehydratase large subunit (476 aa).

[4Fe-4S] cluster is bound by residues Cys347, Cys407, and Cys410. A disordered region spans residues 418 to 442; it reads LAPGERSASTSNRNFEGRQGKGGRT.

It belongs to the aconitase/IPM isomerase family. LeuC type 1 subfamily. As to quaternary structure, heterodimer of LeuC and LeuD. Requires [4Fe-4S] cluster as cofactor.

It carries out the reaction (2R,3S)-3-isopropylmalate = (2S)-2-isopropylmalate. It participates in amino-acid biosynthesis; L-leucine biosynthesis; L-leucine from 3-methyl-2-oxobutanoate: step 2/4. In terms of biological role, catalyzes the isomerization between 2-isopropylmalate and 3-isopropylmalate, via the formation of 2-isopropylmaleate. The sequence is that of 3-isopropylmalate dehydratase large subunit from Streptomyces coelicolor (strain ATCC BAA-471 / A3(2) / M145).